The sequence spans 359 residues: DNA polymerase IV (359 aa).

A UmuC domain is found at I4–G185. D8 and D103 together coordinate Mg(2+). E104 is an active-site residue.

It belongs to the DNA polymerase type-Y family. In terms of assembly, monomer. Mg(2+) is required as a cofactor.

It localises to the cytoplasm. The enzyme catalyses DNA(n) + a 2'-deoxyribonucleoside 5'-triphosphate = DNA(n+1) + diphosphate. In terms of biological role, poorly processive, error-prone DNA polymerase involved in untargeted mutagenesis. Copies undamaged DNA at stalled replication forks, which arise in vivo from mismatched or misaligned primer ends. These misaligned primers can be extended by PolIV. Exhibits no 3'-5' exonuclease (proofreading) activity. May be involved in translesional synthesis, in conjunction with the beta clamp from PolIII. This chain is DNA polymerase IV, found in Shewanella loihica (strain ATCC BAA-1088 / PV-4).